The following is a 564-amino-acid chain: Dihydropyrimidinase-related protein 5 (564 aa).

A phosphothreonine mark is found at Thr-509 and Thr-514. Phosphoserine is present on residues Ser-532 and Ser-538. Arg-559 is subject to Omega-N-methylarginine.

It belongs to the metallo-dependent hydrolases superfamily. Hydantoinase/dihydropyrimidinase family. Homotetramer, and heterotetramer with other DPYS-like proteins. Interacts with DPYSL2, DPYSL3 and DPYSL4. Interacts with MAP2 and TUBB3. Highly expressed in embryonic and early postnatal brain and spinal cord.

It localises to the cytoplasm. Involved in the negative regulation of dendrite outgrowth. The chain is Dihydropyrimidinase-related protein 5 (Dpysl5) from Rattus norvegicus (Rat).